Here is a 356-residue protein sequence, read N- to C-terminus: MHHQWLLLAACFWVIFMFMVASKFITLTFKDPDVYSAKQEFLFLTTMPEVRKLPEEKHIPEELKPTGKELPDSRLVQPLVYMERLELIRNVCRDDALKNLSHTPVSKFVLDRIFVCDKHKILFCQTPKVGNTQWKKVLIVLNGAFPSIEEIPENVVHDHEKNGLPRLSSFSDAEIQKRLKTYFKFFIVRDPFERLISAFKDKFVHNPRFEPWYRHEIAPGIIRKYRRNRTESRGIQFEDFVRYLGDPNHRWLDLQFGDHIIHWVTYVELCAPCEIMYSVIGHHETLEDDAPYILKEAGIDHLVSYPTIPPGITVYNRTKVEHYFLGISKRDIRRLYARFEGDFKLFGYQKPDFLLN.

Topologically, residues 1–6 (MHHQWL) are cytoplasmic. A helical; Signal-anchor for type II membrane protein membrane pass occupies residues 7 to 27 (LLAACFWVIFMFMVASKFITL). At 28-356 (TFKDPDVYSA…GYQKPDFLLN (329 aa)) the chain is on the lumenal side. Asparagine 99 carries an N-linked (GlcNAc...) asparagine glycan. 3'-phosphoadenylyl sulfate is bound by residues 127 to 133 (PKVGNTQ) and 189 to 197 (RDPFERLIS). Residues asparagine 228 and asparagine 316 are each glycosylated (N-linked (GlcNAc...) asparagine).

The protein belongs to the sulfotransferase 2 family.

Its subcellular location is the golgi apparatus membrane. The catalysed reaction is 3-O-{beta-D-GlcA-(1-&gt;[3)-alpha-D-Xyl-(1-&gt;3)-beta-D-GlcA-(1-&gt;](n)-4)-beta-D-Xyl-(1-&gt;4)-Rib-ol-P-Rib-ol-P-3-beta-D-GalNAc-(1-&gt;3)-beta-D-GlcNAc-(1-&gt;4)-O-6-P-alpha-D-Man}-L-Thr-[protein] + 3'-phosphoadenylyl sulfate = 3-O-{O-3-S-beta-D-GlcA-(1-&gt;[3)-alpha-D-Xyl-(1-&gt;3)-beta-D-GlcA-(1-&gt;](n)-4)-beta-D-Xyl-(1-&gt;4)-Rib-ol-P-Rib-ol-P-3-beta-D-GalNAc-(1-&gt;3)-beta-D-GlcNAc-(1-&gt;4)-O-6-P-alpha-D-Man}-L-Thr-[protein] + adenosine 3',5'-bisphosphate + H(+). It catalyses the reaction 17beta-estradiol 3-O-(beta-D-glucuronate) + 3'-phosphoadenylyl sulfate = 17beta-estradiol 3-O-(3-sulfo-beta-D-glucuronate) + adenosine 3',5'-bisphosphate + H(+). It carries out the reaction 17beta-estradiol 3-O-(beta-D-glucuronate) 17-sulfate + 3'-phosphoadenylyl sulfate = 17beta-estradiol 3-O-(3-sulfo-beta-D-glucuronate) 17-sulfate + adenosine 3',5'-bisphosphate + H(+). The enzyme catalyses 17beta-estradiol 17-O-(beta-D-glucuronate) + 3'-phosphoadenylyl sulfate = 17beta-estradiol 17-O-(3-sulfo-beta-D-glucuronate) + adenosine 3',5'-bisphosphate + H(+). The catalysed reaction is 16alpha,17beta-estriol 3-O-(beta-D-glucuronate) + 3'-phosphoadenylyl sulfate = 16alpha,17beta-estriol 3-O-(3-sulfo-beta-D-glucuronate) + adenosine 3',5'-bisphosphate + H(+). It catalyses the reaction 16alpha,17beta-estriol 16-O-(beta-D-glucuronate) + 3'-phosphoadenylyl sulfate = 16alpha,17beta-estriol 16-O-(3-sulfo-beta-D-glucuronate) + adenosine 3',5'-bisphosphate + H(+). It carries out the reaction 16alpha,17beta-estriol 17-O-(beta-D-glucuronate) + 3'-phosphoadenylyl sulfate = 16alpha,17beta-estriol 17-O-(3-sulfo-beta-D-glucuronate) + adenosine 3',5'-bisphosphate + H(+). The enzyme catalyses estrone 3-O-(beta-D-glucuronate) + 3'-phosphoadenylyl sulfate = estrone 3-O-(3-sulfo-beta-D-glucuronate) + adenosine 3',5'-bisphosphate + H(+). The catalysed reaction is 3alpha,20alpha-dihydroxy-5beta-pregnane 3-O-(beta-D-glucuronate) + 3'-phosphoadenylyl sulfate = 3alpha,20alpha-dihydroxy-5beta-pregnane 3-O-(3-sulfo-beta-D-glucuronate) + adenosine 3',5'-bisphosphate + H(+). It catalyses the reaction testosterone 17-O-(beta-D-glucuronate) + 3'-phosphoadenylyl sulfate = testosterone 17-O-(3-sulfo-beta-D-glucuronate) + adenosine 3',5'-bisphosphate + H(+). It carries out the reaction 3beta-androst-5-en-17-one 3-O-(beta-D-glucuronate) + 3'-phosphoadenylyl sulfate = 3beta-androst-5-en-17-one 3-O-(3-sulfo-beta-D-glucuronate) + adenosine 3',5'-bisphosphate + H(+). The enzyme catalyses 3alpha,17alpha-dihydroxy-5beta-androstane-11-one-17beta-carboxylate 3-O-(beta-D-glucuronate) + 3'-phosphoadenylyl sulfate = 3alpha,17alpha-dihydroxy-5beta-androstane-11-one-17beta-carboxylate 3-O-(3-sulfo-beta-D-glucuronate) + adenosine 3',5'-bisphosphate + H(+). The catalysed reaction is 3alpha-hydroxyetiocholan-17-one 3-O-(beta-D-glucuronate) + 3'-phosphoadenylyl sulfate = 3alpha-hydroxyetiocholan-17-one 3-O-(3-sulfo-beta-D-glucuronate) + adenosine 3',5'-bisphosphate + H(+). Its pathway is steroid metabolism. It participates in protein modification; carbohydrate sulfation. In terms of biological role, catalyzes the transfer of sulfate from 3'-phosphoadenylyl sulfate (PAPS) to position 3 of terminal glucuronic acid of both protein- and lipid-linked oligosaccharides. Participates in biosynthesis of HNK-1 carbohydrate structure 3-O-sulfo-beta-D-GlcA-(1-&gt;3)-beta-D-Gal-(1-&gt;4)-D-GlcNAc-R, a sulfated glucuronyl-lactosaminyl residue carried by many neural recognition molecules, which is involved in cell interactions during ontogenetic development and in synaptic plasticity in the adult. May be indirectly involved in synapse plasticity of the hippocampus, via its role in HNK-1 biosynthesis. Sulfates terminal glucuronyl residue of the laminin globular (LG)-domain binding epitope on DAG1/alpha-dystroglycan and prevents further polymerization by LARGE1 glycosyltransferase. Likely defines the chain length of LG epitope, conferring binding specificity to extracellular matrix components. Plays a role in down-regulating the steroid hormones. Sulfates glucuronidated estrogens and androgens with an impact in hormone cycle and fertility. Has a preference for glucuronyl moiety at the 3-hydroxyl group of a sterol ring rather than the 17-hydroxyl group, showing high catalytic efficiency for 17beta-estradiol 3-O-(beta-D-glucuronate) and dehydroepiandrosterone 3-O-(beta-D-glucuronate) hormones. The chain is Carbohydrate sulfotransferase 10 (CHST10) from Pongo abelii (Sumatran orangutan).